The chain runs to 514 residues: Histidine ammonia-lyase (514 aa).

Positions 144-146 (ASG) form a cross-link, 5-imidazolinone (Ala-Gly). Position 145 is a 2,3-didehydroalanine (Ser) (Ser-145).

This sequence belongs to the PAL/histidase family. In terms of processing, contains an active site 4-methylidene-imidazol-5-one (MIO), which is formed autocatalytically by cyclization and dehydration of residues Ala-Ser-Gly.

The protein resides in the cytoplasm. The catalysed reaction is L-histidine = trans-urocanate + NH4(+). Its pathway is amino-acid degradation; L-histidine degradation into L-glutamate; N-formimidoyl-L-glutamate from L-histidine: step 1/3. This Rhodospirillum rubrum (strain ATCC 11170 / ATH 1.1.1 / DSM 467 / LMG 4362 / NCIMB 8255 / S1) protein is Histidine ammonia-lyase.